We begin with the raw amino-acid sequence, 375 residues long: Lipid-A-disaccharide synthase (375 aa).

Belongs to the LpxB family.

The catalysed reaction is a lipid X + a UDP-2-N,3-O-bis[(3R)-3-hydroxyacyl]-alpha-D-glucosamine = a lipid A disaccharide + UDP + H(+). It functions in the pathway bacterial outer membrane biogenesis; LPS lipid A biosynthesis. Condensation of UDP-2,3-diacylglucosamine and 2,3-diacylglucosamine-1-phosphate to form lipid A disaccharide, a precursor of lipid A, a phosphorylated glycolipid that anchors the lipopolysaccharide to the outer membrane of the cell. The polypeptide is Lipid-A-disaccharide synthase (Pseudomonas putida (strain ATCC 700007 / DSM 6899 / JCM 31910 / BCRC 17059 / LMG 24140 / F1)).